Consider the following 92-residue polypeptide: Signal recognition particle 19 kDa protein (92 aa).

Belongs to the SRP19 family. Part of the signal recognition particle protein translocation system, which is composed of SRP and FtsY. Archaeal SRP consists of a 7S RNA molecule of 300 nucleotides and two protein subunits: SRP54 and SRP19.

The protein localises to the cytoplasm. Functionally, involved in targeting and insertion of nascent membrane proteins into the cytoplasmic membrane. Binds directly to 7S RNA and mediates binding of the 54 kDa subunit of the SRP. This is Signal recognition particle 19 kDa protein from Haloarcula marismortui (strain ATCC 43049 / DSM 3752 / JCM 8966 / VKM B-1809) (Halobacterium marismortui).